A 91-amino-acid chain; its full sequence is DNA-binding protein HRL53 (91 aa).

The tract at residues 57–91 (ATKGRNPSTGAEVDIPARNVPKFTPGKGLKDAVNG) is disordered.

It belongs to the bacterial histone-like protein family.

Its function is as follows. Histone-like DNA-binding protein which is capable of wrapping DNA to stabilize it, and thus to prevent its denaturation under extreme environmental conditions. Binds to nod promoters and induces DNA binding. This chain is DNA-binding protein HRL53, found in Rhizobium leguminosarum.